The primary structure comprises 29 residues: Kunitz-type trypsin inhibitor IVTI (29 aa).

It belongs to the protease inhibitor I3 (leguminous Kunitz-type inhibitor) family. As to quaternary structure, monomer and dimer.

Inhibits bovine trypsin but not chymotrypsin. Also inhibits trypsin-like enzymes from midgut of several lepidopteran species and inhibits larval development in those species. Has fungicidal activity against yeast C.buinensis. Has a bacteriostatic effect against E.coli. Is not cytotoxic. In Inga vera (River koko), this protein is Kunitz-type trypsin inhibitor IVTI.